Reading from the N-terminus, the 165-residue chain is Ribosome maturation factor RimM (165 aa).

One can recognise a PRC barrel domain in the interval 94-165; that stretch reads EDEFYIADLN…YVILNYQTKV (72 aa).

The protein belongs to the RimM family. As to quaternary structure, binds ribosomal protein uS19.

It is found in the cytoplasm. In terms of biological role, an accessory protein needed during the final step in the assembly of 30S ribosomal subunit, possibly for assembly of the head region. Essential for efficient processing of 16S rRNA. May be needed both before and after RbfA during the maturation of 16S rRNA. It has affinity for free ribosomal 30S subunits but not for 70S ribosomes. The chain is Ribosome maturation factor RimM from Rickettsia prowazekii (strain Madrid E).